Here is a 407-residue protein sequence, read N- to C-terminus: Peptidase T (407 aa).

His-81 contributes to the Zn(2+) binding site. Asp-83 is an active-site residue. Asp-142 provides a ligand contact to Zn(2+). The active-site Proton acceptor is Glu-176. Zn(2+)-binding residues include Glu-177, Asp-199, and His-381.

Belongs to the peptidase M20B family. Requires Zn(2+) as cofactor.

It localises to the cytoplasm. It carries out the reaction Release of the N-terminal residue from a tripeptide.. Functionally, cleaves the N-terminal amino acid of tripeptides. The sequence is that of Peptidase T from Streptococcus pneumoniae (strain ATCC 700669 / Spain 23F-1).